We begin with the raw amino-acid sequence, 661 residues long: MKFTRTLVLVSTSLLATVATSQAQEVKRDTKKQGEVVLKPITIISHGKDNIEATGGTVLTYKDIEKLQPANVSELFSRQSSIAVSGGGGPSKRIHVLGMEQSNLAVSVDGVPQTATSWHHTGSNVIDPAFLKRVEVEAGAAAADSGFGAAAGAIRYETVNALDLLEPGKTFGARIIGSYGTNGRGFSGSTAAYGLKDGFDWLLMLHGTSGHNYKNGDGTEILGTEPAARNILGKAGYEFDGNRIDIGYERSRDKADRLIKMNMGLPGDTEYPLEVARDSVNIKYTRTDATDMWDPEVQFYYNRNDYWRNDYQNRTNGNMILKEDLYGGKLQNTFTIDYGKITAGIDFGKHDYNTDNYGHNDRRYRKFNTQQVGAFTQGRFEFDNGFSLSTGARYDYSRFADWNDEVFSDSGASVNGTLSYKFNEHIEVFAGASRTWLGYVLGDYGYVHARNNAFYTDPTFSPGRARNYKAGVNFGGADWSAGITLFDTRIAGLPNYDSQKLGNDPEEYRSRGFTLNARYIWNYTTIGATFTKAKVTAGDDPVLPNSGSFMPIGDMATLFIDQEIPDYNMKVGATLAWAGRISDEAATAANFYDQPAYTVVNAYAEWNPPAVKNMTLRVGVENLFNENYYERTSFAPSQNRGGIDAVWAPGRTFTFQTAFKF.

A signal peptide spans 1–23 (MKFTRTLVLVSTSLLATVATSQA). A TBDR plug domain is found at 48-159 (KDNIEATGGT…AAGAIRYETV (112 aa)). A TBDR beta-barrel domain is found at 170 to 661 (TFGARIIGSY…TFTFQTAFKF (492 aa)).

The protein belongs to the TonB-dependent receptor family.

It is found in the cell outer membrane. Heme transporter playing an important role in stationary-phase iron acquisition and required for maintenance of chronic infection in mice. This chain is Heme transporter BhuA (bhuA), found in Brucella abortus (strain 2308).